A 1761-amino-acid chain; its full sequence is 6-methylsalicylic acid synthase AOL_s00215g283 (1761 aa).

One can recognise a Ketosynthase family 3 (KS3) domain in the interval 18-443; sequence QDDIAIIGMA…GTVAHAVIEQ (426 aa). Active-site for beta-ketoacyl synthase activity residues include cysteine 190, histidine 325, and histidine 367. Residues 554–870 form a malonyl-CoA:ACP transacylase (MAT) domain region; it reads VWVFSGHGAH…ALGKLHCHGA (317 aa). The For malonyltransferase activity role is filled by serine 641. The N-terminal hotdog fold stretch occupies residues 918–1038; it reads HVLLGAKHQV…GHVANNEWSK (121 aa). Residues 918-1187 are dehydratase (DH) domain; the sequence is HVLLGAKHQV…NGMRFSAVEG (270 aa). In terms of domain architecture, PKS/mFAS DH spans 918 to 1191; the sequence is HVLLGAKHQV…FSAVEGTPGA (274 aa). The Proton acceptor; for dehydratase activity role is filled by histidine 950. Residues 1050–1191 form a C-terminal hotdog fold region; it reads LPSVKPSFAT…FSAVEGTPGA (142 aa). Residue aspartate 1113 is the Proton donor; for dehydratase activity of the active site. Residues 1399–1587 form a ketoreductase (KR) domain region; sequence GTYLITGGLG…IVSFLWTSWN (189 aa). The segment at 1654-1680 is disordered; sequence PRKRAESSGTEAVSKGEVSEKAPVPKS. In terms of domain architecture, Carrier spans 1686–1761; the sequence is EYLQNAISEC…HLVKWFEEKI (76 aa). At serine 1721 the chain carries O-(pantetheine 4'-phosphoryl)serine.

The enzyme catalyses 3 malonyl-CoA + acetyl-CoA + NADPH + 3 H(+) = 6-methylsalicylate + 3 CO2 + NADP(+) + 4 CoA + H2O. It functions in the pathway secondary metabolite biosynthesis; terpenoid biosynthesis. 6-methylsalicylic acid synthase; part of the gene cluster that mediates the biosynthesis of sesquiterpenyl epoxy-cyclohexenoids (SECs) such as anthrobotrisins and arthrosporols, metabolites that possess a novel hybrid carbon skeleton consisting of a polyketide-derived epoxycyclohexenol combined with a terpenoid-derived monocyclic sesquiterpenol substructure (PKS-PTS hybrid). The SEC pathway plays an important role for fungal soil colonization via decreasing fungal nematode-capturing ability. Within the pathway, the polyketide synthase (PKS) AOL_s00215g283 catalyzes the biosynthesis of 6-methylsalicylic acid (6-MSA) via condensation of 1 acetate and 3 malonate units. AOL_s00215g283 performs a series of programmed reactions including Claisen condensation, dehydration, reduction, and cyclization to yield 6-MSA. The pathway begins with the biosynthesis of 6-methylsalicylic acid (6-MSA), the first precursor of the polyketide-derived epoxycyclohexenol in arthrosporols, by the polyketide synthase (PKS) AOL_s00215g283. The 6-methylsalicylic acid decarboxylase AOL_s00215g281 then catalyzes the decarboxylation of 6-methylsalicylic acid to yield m-cresol. The cytochrome P450 monooxygenase AOL_s00215g282 further oxidizes m-cresol to yield toluquinol. With the assistance of the oxidoreductase AOL_s00215g277, the polyprenyl transferase AOL_s00215g276 catalyzes the farnesylation of toluquinol to produce farnesyl hydroquinone, the hybrid precursor for biosynthesis of SECs. Farnesyl hydroquinone undergoes epoxidation and then subsequent dehydrogenation to form farnesyl epoxy-quinone, the first and simplest SEC. The cytochrome P450 monooxygenase AOL_s00215g278 and the FAD-dependent monooxygenase AOL_s00215g279 might be involved in the oxygenation of the phenol moiety, most likely in the epoxy formation. The cytochrome P450 monooxygenases AOL_s00215g274 and AOL_s00215g280 are involved in specific regional ketone reductions at respectively C-4 and C-1 of farnesyl epoxy-quinone PubMed:33823587. In Arthrobotrys oligospora (strain ATCC 24927 / CBS 115.81 / DSM 1491) (Nematode-trapping fungus), this protein is 6-methylsalicylic acid synthase AOL_s00215g283.